The sequence spans 328 residues: Serine/threonine-protein phosphatase PP2A-2 catalytic subunit (328 aa).

Mn(2+)-binding residues include Asp76, His78, Asp104, and Asn136. His137 (proton donor) is an active-site residue. Positions 186 and 260 each coordinate Mn(2+). A Leucine methyl ester modification is found at Leu328.

The protein belongs to the PPP phosphatase family. PP-2A subfamily. Requires Mn(2+) as cofactor.

It carries out the reaction O-phospho-L-seryl-[protein] + H2O = L-seryl-[protein] + phosphate. The catalysed reaction is O-phospho-L-threonyl-[protein] + H2O = L-threonyl-[protein] + phosphate. The protein is Serine/threonine-protein phosphatase PP2A-2 catalytic subunit (PP2A-2) of Blumeria hordei (Barley powdery mildew).